Consider the following 60-residue polypeptide: Metallothionein B (60 aa).

The tract at residues 1-28 is beta; the sequence is MDPCDCSKSGTCNCGGSCTCTNCSCTSC. 20 residues coordinate a divalent metal cation: Cys4, Cys6, Cys12, Cys14, Cys18, Cys20, Cys23, Cys25, Cys28, Cys32, Cys33, Cys35, Cys36, Cys40, Cys43, Cys47, Cys49, Cys54, Cys58, and Cys59. Residues 29–60 are alpha; the sequence is KKSCCPCCPSGCTKCASGCVCKGKTCDTSCCQ.

The protein belongs to the metallothionein superfamily. Type 1 family.

Metallothioneins have a high content of cysteine residues that bind various heavy metals. The sequence is that of Metallothionein B (mtb) from Chionodraco hamatus (Antarctic teleost icefish).